Reading from the N-terminus, the 147-residue chain is Hemoglobin subunit gamma-1 (147 aa).

Gly2 carries the post-translational modification N-acetylglycine. The Globin domain maps to 3–147 (HFTEEDKATI…VASALSSRYH (145 aa)). Thr13 bears the Phosphothreonine mark. Residues Ser45, Ser51, and Ser53 each carry the phosphoserine modification. At Lys60 the chain carries N6-acetyllysine. His64 serves as a coordination point for heme b. At Lys83 the chain carries N6-acetyllysine. Position 93 (His93) interacts with heme b. At Cys94 the chain carries S-nitrosocysteine. Ser140 is subject to Phosphoserine.

The protein belongs to the globin family. Heterotetramer of two alpha chains and two gamma chains in fetal hemoglobin (Hb F). Red blood cells.

In terms of biological role, gamma chains make up the fetal hemoglobin F, in combination with alpha chains. The protein is Hemoglobin subunit gamma-1 (HBG1) of Pongo pygmaeus (Bornean orangutan).